The sequence spans 952 residues: Valine--tRNA ligase (952 aa).

Positions 42 to 52 (PNVTGSLHMGH) match the 'HIGH' region motif. A 'KMSKS' region motif is present at residues 554-558 (KMSKS). Residue lysine 557 participates in ATP binding. Residues 888 to 952 (AELARLDGEI…EEQKKTIAAL (65 aa)) adopt a coiled-coil conformation.

It belongs to the class-I aminoacyl-tRNA synthetase family. ValS type 1 subfamily. Monomer.

It localises to the cytoplasm. It catalyses the reaction tRNA(Val) + L-valine + ATP = L-valyl-tRNA(Val) + AMP + diphosphate. Catalyzes the attachment of valine to tRNA(Val). As ValRS can inadvertently accommodate and process structurally similar amino acids such as threonine, to avoid such errors, it has a 'posttransfer' editing activity that hydrolyzes mischarged Thr-tRNA(Val) in a tRNA-dependent manner. This chain is Valine--tRNA ligase, found in Vibrio parahaemolyticus serotype O3:K6 (strain RIMD 2210633).